We begin with the raw amino-acid sequence, 79 residues long: Delta-hormotoxin-Cpt1a (79 aa).

The signal sequence occupies residues 1-20; that stretch reads MKTQVLAVFVLCVLFCLAES. Positions 21-31 are excised as a propeptide; sequence RTTLNKRIDIA. Disulfide bonds link Cys36-Cys75, Cys38-Cys66, and Cys56-Cys76.

This sequence belongs to the sea anemone sodium channel inhibitory toxin family.

It localises to the secreted. The protein resides in the nematocyst. Functionally, in neuromuscular preparation of crustaceans, the toxin increased neurotransmitter release, causing repetitive firing of the axons. May affect sodium channels (Nav). This chain is Delta-hormotoxin-Cpt1a, found in Calliactis parasitica (Sea anemone).